The following is a 159-amino-acid chain: ATP synthase subunit b 2 (159 aa).

Residues 1-21 traverse the membrane as a helical segment; the sequence is MDATFWALIGLIIFLAILAYL.

The protein belongs to the ATPase B chain family. In terms of assembly, F-type ATPases have 2 components, F(1) - the catalytic core - and F(0) - the membrane proton channel. F(1) has five subunits: alpha(3), beta(3), gamma(1), delta(1), epsilon(1). F(0) has three main subunits: a(1), b(2) and c(10-14). The alpha and beta chains form an alternating ring which encloses part of the gamma chain. F(1) is attached to F(0) by a central stalk formed by the gamma and epsilon chains, while a peripheral stalk is formed by the delta and b chains.

The protein localises to the cell inner membrane. Its function is as follows. F(1)F(0) ATP synthase produces ATP from ADP in the presence of a proton or sodium gradient. F-type ATPases consist of two structural domains, F(1) containing the extramembraneous catalytic core and F(0) containing the membrane proton channel, linked together by a central stalk and a peripheral stalk. During catalysis, ATP synthesis in the catalytic domain of F(1) is coupled via a rotary mechanism of the central stalk subunits to proton translocation. Component of the F(0) channel, it forms part of the peripheral stalk, linking F(1) to F(0). This chain is ATP synthase subunit b 2, found in Brucella anthropi (strain ATCC 49188 / DSM 6882 / CCUG 24695 / JCM 21032 / LMG 3331 / NBRC 15819 / NCTC 12168 / Alc 37) (Ochrobactrum anthropi).